A 156-amino-acid polypeptide reads, in one-letter code: ATP synthase subunit b (156 aa).

The chain crosses the membrane as a helical span at residues 7 to 26; it reads ILGQAIAFVLFVWFCMKYVW.

It belongs to the ATPase B chain family. As to quaternary structure, F-type ATPases have 2 components, F(1) - the catalytic core - and F(0) - the membrane proton channel. F(1) has five subunits: alpha(3), beta(3), gamma(1), delta(1), epsilon(1). F(0) has three main subunits: a(1), b(2) and c(10-14). The alpha and beta chains form an alternating ring which encloses part of the gamma chain. F(1) is attached to F(0) by a central stalk formed by the gamma and epsilon chains, while a peripheral stalk is formed by the delta and b chains.

The protein localises to the cell inner membrane. In terms of biological role, f(1)F(0) ATP synthase produces ATP from ADP in the presence of a proton or sodium gradient. F-type ATPases consist of two structural domains, F(1) containing the extramembraneous catalytic core and F(0) containing the membrane proton channel, linked together by a central stalk and a peripheral stalk. During catalysis, ATP synthesis in the catalytic domain of F(1) is coupled via a rotary mechanism of the central stalk subunits to proton translocation. Functionally, component of the F(0) channel, it forms part of the peripheral stalk, linking F(1) to F(0). This Pectobacterium atrosepticum (strain SCRI 1043 / ATCC BAA-672) (Erwinia carotovora subsp. atroseptica) protein is ATP synthase subunit b.